Here is a 60-residue protein sequence, read N- to C-terminus: Large ribosomal subunit protein bL32 (60 aa).

The span at 1–23 (MAKHPVPKKKTSKSKRDMRRSHH) shows a compositional bias: basic residues. Residues 1–26 (MAKHPVPKKKTSKSKRDMRRSHHALT) are disordered.

This sequence belongs to the bacterial ribosomal protein bL32 family.

In Deinococcus deserti (strain DSM 17065 / CIP 109153 / LMG 22923 / VCD115), this protein is Large ribosomal subunit protein bL32.